A 457-amino-acid polypeptide reads, in one-letter code: Siroheme synthase (457 aa).

Positions 1 to 204 (MDHLPIFCQL…ADEKAVNATT (204 aa)) are precorrin-2 dehydrogenase /sirohydrochlorin ferrochelatase. Residues 22-23 (DV) and 43-44 (LT) contribute to the NAD(+) site. Phosphoserine is present on S128. A uroporphyrinogen-III C-methyltransferase region spans residues 216–457 (GEVVLVGAGP…RDKLNWFSNY (242 aa)). P225 contributes to the S-adenosyl-L-methionine binding site. D248 serves as the catalytic Proton acceptor. K270 functions as the Proton donor in the catalytic mechanism. S-adenosyl-L-methionine-binding positions include 301–303 (GGD), I306, 331–332 (TA), M382, and G411.

The protein in the N-terminal section; belongs to the precorrin-2 dehydrogenase / sirohydrochlorin ferrochelatase family. This sequence in the C-terminal section; belongs to the precorrin methyltransferase family.

It carries out the reaction uroporphyrinogen III + 2 S-adenosyl-L-methionine = precorrin-2 + 2 S-adenosyl-L-homocysteine + H(+). It catalyses the reaction precorrin-2 + NAD(+) = sirohydrochlorin + NADH + 2 H(+). The catalysed reaction is siroheme + 2 H(+) = sirohydrochlorin + Fe(2+). The protein operates within cofactor biosynthesis; adenosylcobalamin biosynthesis; precorrin-2 from uroporphyrinogen III: step 1/1. It participates in cofactor biosynthesis; adenosylcobalamin biosynthesis; sirohydrochlorin from precorrin-2: step 1/1. Its pathway is porphyrin-containing compound metabolism; siroheme biosynthesis; precorrin-2 from uroporphyrinogen III: step 1/1. It functions in the pathway porphyrin-containing compound metabolism; siroheme biosynthesis; siroheme from sirohydrochlorin: step 1/1. The protein operates within porphyrin-containing compound metabolism; siroheme biosynthesis; sirohydrochlorin from precorrin-2: step 1/1. Its function is as follows. Multifunctional enzyme that catalyzes the SAM-dependent methylations of uroporphyrinogen III at position C-2 and C-7 to form precorrin-2 via precorrin-1. Then it catalyzes the NAD-dependent ring dehydrogenation of precorrin-2 to yield sirohydrochlorin. Finally, it catalyzes the ferrochelation of sirohydrochlorin to yield siroheme. The protein is Siroheme synthase of Salmonella dublin (strain CT_02021853).